A 404-amino-acid polypeptide reads, in one-letter code: Cysteine--tRNA ligase (404 aa).

A Zn(2+)-binding site is contributed by C14. The 'HIGH' region signature appears at 16–26; sequence PTVYSDVHIGN. Positions 190, 216, and 220 each coordinate Zn(2+). Residues 248–252 carry the 'KMSKS' region motif; sequence KMAKS. K251 contributes to the ATP binding site.

It belongs to the class-I aminoacyl-tRNA synthetase family. In terms of assembly, monomer. Requires Zn(2+) as cofactor.

It is found in the cytoplasm. The catalysed reaction is tRNA(Cys) + L-cysteine + ATP = L-cysteinyl-tRNA(Cys) + AMP + diphosphate. The chain is Cysteine--tRNA ligase from Mesomycoplasma hyopneumoniae (strain 232) (Mycoplasma hyopneumoniae).